The following is a 107-amino-acid chain: U1-lycotoxin-Ls1b (107 aa).

The first 20 residues, 1–20 (MMKVLVVVALLVTLISYSSG), serve as a signal peptide directing secretion. The propeptide occupies 21–41 (EGIDDLEADELLSLMANEQTR). 4 cysteine pairs are disulfide-bonded: Cys44-Cys59, Cys51-Cys68, Cys58-Cys86, and Cys70-Cys84.

The protein belongs to the neurotoxin 19 (CSTX) family. 04 (U1-Lctx) subfamily. As to expression, expressed by the venom gland.

It localises to the secreted. The chain is U1-lycotoxin-Ls1b from Lycosa singoriensis (Wolf spider).